Consider the following 224-residue polypeptide: Thiamine-triphosphatase (224 aa).

Position 2 is an N-acetylalanine (Ala2). Residues 5–201 (LIEVERKFTP…AKLLVYLQRF (197 aa)) enclose the CYTH domain. Mg(2+)-binding residues include Glu7 and Glu9. 5 residues coordinate substrate: Lys11, Arg55, Arg57, Lys65, and Arg125. Mg(2+)-binding residues include Asp145, Glu157, and Glu159. Residue Glu157 coordinates substrate. A substrate-binding site is contributed by Lys193.

It belongs to the ThTPase family. As to quaternary structure, monomer. Mg(2+) is required as a cofactor.

It localises to the cytoplasm. It carries out the reaction thiamine triphosphate + H2O = thiamine diphosphate + phosphate + H(+). Hydrolase highly specific for thiamine triphosphate (ThTP). This Rattus norvegicus (Rat) protein is Thiamine-triphosphatase (Thtpa).